Here is a 303-residue protein sequence, read N- to C-terminus: Zinc transporter ZIP9 (303 aa).

Residues 7 to 27 (ISLLSLAMLVGCYVSGIIPLA) form a helical membrane-spanning segment. N-linked (GlcNAc...) asparagine glycosylation is present at asparagine 29. 5 helical membrane passes run 35-55 (LKLV…AVIV), 102-122 (AYIG…DQIG), 142-162 (ITTT…LGAA), 172-192 (LIVF…LVSF), and 206-226 (HLLV…LGLS). Asparagine 237 carries N-linked (GlcNAc...) asparagine glycosylation. 2 consecutive transmembrane segments (helical) span residues 240-260 (GVAM…HVLP) and 282-302 (LEVC…IGHQ).

This sequence belongs to the ZIP transporter (TC 2.A.5) family.

The protein resides in the golgi apparatus. It localises to the trans-Golgi network membrane. It is found in the cell membrane. The protein localises to the cytoplasm. Its subcellular location is the perinuclear region. The protein resides in the mitochondrion. It localises to the nucleus. The catalysed reaction is Zn(2+)(in) = Zn(2+)(out). In terms of biological role, transports zinc ions across cell and organelle membranes into the cytoplasm and regulates intracellular zinc homeostasis. Participates in the zinc ions efflux out of the secretory compartments. Also functions as a membrane androgen receptor that mediates, through a G protein, the non-classical androgen signaling pathway, characterized by the activation of MAPK3/MAPK1 (Erk1/2) and transcription factors CREB1 or ATF1. Moreover, has dual functions as a membrane-bound androgen receptor and as an androgen-dependent zinc transporter both of which are mediated through an inhibitory G protein (Gi) that mediates both MAP kinase and zinc signaling leading to the androgen-dependent apoptotic process. The polypeptide is Zinc transporter ZIP9 (Xenopus tropicalis (Western clawed frog)).